A 206-amino-acid polypeptide reads, in one-letter code: Inactive ribonuclease-like protein 9 (206 aa).

A signal peptide spans 1–26 (MMRTLITTHSLLLFLLLLQLLQPLQF). 3 disulfide bridges follow: Cys99/Cys154, Cys117/Cys169, and Cys124/Cys131. Asn132 is a glycosylation site (N-linked (GlcNAc...) asparagine).

The protein belongs to the pancreatic ribonuclease family.

It localises to the secreted. Its function is as follows. Does not exhibit any ribonuclease activity. In Saimiri boliviensis boliviensis (Bolivian squirrel monkey), this protein is Inactive ribonuclease-like protein 9 (RNASE9).